The following is a 134-amino-acid chain: UPF0412 protein YaaI (134 aa).

The N-terminal stretch at 1-23 is a signal peptide; that stretch reads MKSVFTISASLAISLMLCCTAQA.

Belongs to the UPF0412 family.

This chain is UPF0412 protein YaaI, found in Escherichia coli (strain ATCC 8739 / DSM 1576 / NBRC 3972 / NCIMB 8545 / WDCM 00012 / Crooks).